Reading from the N-terminus, the 731-residue chain is Replication restart protein PriA (731 aa).

The tract at residues methionine 1–alanine 98 is 3'BD. Residues tryptophan 115 to cysteine 177 form a WH region. Residues threonine 200–threonine 375 are helicase lobe 1. Residues histidine 210–leucine 376 enclose the Helicase ATP-binding domain. Residue glycine 223–threonine 230 participates in ATP binding. The ADP site is built by glycine 226, glycine 228, lysine 229, threonine 230, glutamate 231, and arginine 263. Residues aspartate 319–histidine 322 carry the DEAH box motif. Positions tyrosine 326–alanine 340 match the Aromatic-rich loop (ARL) motif. The interval glutamine 387 to alanine 430 is helicase lobe 2, N-terminus. The CRR stretch occupies residues proline 431–proline 485. Zn(2+)-binding residues include cysteine 435, cysteine 438, cysteine 444, cysteine 447, cysteine 462, cysteine 465, cysteine 475, and cysteine 478. The Helicase C-terminal domain occupies proline 470 to leucine 637. The tract at residues valine 486–threonine 626 is helicase lobe 2, C-terminus. Lysine 543 contributes to the ADP binding site. The segment at threonine 633–glycine 731 is CTD.

It belongs to the helicase family. PriA subfamily. In terms of assembly, binds SSB. Component of the replication restart primosome. It depends on Zn(2+) as a cofactor.

The catalysed reaction is Couples ATP hydrolysis with the unwinding of duplex DNA by translocating in the 3'-5' direction.. It catalyses the reaction ATP + H2O = ADP + phosphate + H(+). ATPase activity is stimulated by single-stranded binding protein (SSB). Functionally, initiates the restart of stalled replication forks, which reloads the replicative helicase on sites other than the origin of replication. Recognizes and binds to abandoned replication forks and remodels them to uncover a helicase loading site. Promotes assembly of the primosome at these replication forks. In terms of biological role, recognizes abandoned replication forks and remodels SSB on ssDNA to uncover a loading site for DnaB. Binds replication fork DNA, has DNA-dependent ATPase activity in the presence of replication fork DNA, restores normal cell growth and SOS induction to E.coli mutant pirA304. This Klebsiella pneumoniae subsp. pneumoniae (strain ATCC 700721 / MGH 78578) protein is Replication restart protein PriA.